The sequence spans 149 residues: Large ribosomal subunit protein bL9 (149 aa).

Belongs to the bacterial ribosomal protein bL9 family.

Functionally, binds to the 23S rRNA. In Anaeromyxobacter dehalogenans (strain 2CP-C), this protein is Large ribosomal subunit protein bL9.